We begin with the raw amino-acid sequence, 309 residues long: Tagatose-6-phosphate kinase (309 aa).

This sequence belongs to the carbohydrate kinase PfkB family. LacC subfamily.

The catalysed reaction is D-tagatofuranose 6-phosphate + ATP = D-tagatofuranose 1,6-bisphosphate + ADP + H(+). It participates in carbohydrate metabolism; D-tagatose 6-phosphate degradation; D-glyceraldehyde 3-phosphate and glycerone phosphate from D-tagatose 6-phosphate: step 1/2. This Streptococcus pyogenes serotype M6 (strain ATCC BAA-946 / MGAS10394) protein is Tagatose-6-phosphate kinase.